A 150-amino-acid polypeptide reads, in one-letter code: MSLYEHVFLVRQDVTAQQVEELAARFKGVIEANGGTVSKVEAWGVKSLTYRIKKNRKAHFTLFNIDAPAAAVQEMERQMGIDEDVLRFLTIRVDELEEGPSAMLQKRDRDDRGERGERGFGGGGFGGGRDREDRPRRGRDREEAATEETF.

Positions 99 to 150 are disordered; it reads GPSAMLQKRDRDDRGERGERGFGGGGFGGGRDREDRPRRGRDREEAATEETF. Basic and acidic residues-rich tracts occupy residues 105 to 118 and 128 to 144; these read QKRDRDDRGERGER and GRDREDRPRRGRDREEA.

It belongs to the bacterial ribosomal protein bS6 family.

Functionally, binds together with bS18 to 16S ribosomal RNA. The protein is Small ribosomal subunit protein bS6 of Azorhizobium caulinodans (strain ATCC 43989 / DSM 5975 / JCM 20966 / LMG 6465 / NBRC 14845 / NCIMB 13405 / ORS 571).